A 378-amino-acid chain; its full sequence is MNIWLSMLTTTGLGAIIGGFTNHLAIKMLFRPHRPMYIGKFQVPFTPGLIPKRRDELAVQLGKMVVEHLLTPEGIGKKLTNEEFQKGLIHWAQVEVDKVMTNEQSLRHMLEKWDVAHVEKEATEKIEQVIIEKIEAFLEEYYTYTWEQALPHSVHEKIENAIPNVSAFILKRATHFFESEEGKSRLSKMIDDFFASRGALLNLVGMFLGNVSVVDRVQPEVIKFLGQDGTKQLLTDVLQKEWEKLKGRDVKELETFVEKEMIASSILSAVQVEETVGKFLNQSVQQVCEPVRETIIEKVVPGAVTKGLEWGAKNVESILNNLHLAEIVQQEVSTFSTERLEDLVLSITKNELKMITYLGALLGGMIGIVQGLLLLFLK.

2 consecutive transmembrane segments (helical) span residues 1-21 (MNIWLSMLTTTGLGAIIGGFT) and 357-377 (YLGALLGGMIGIVQGLLLLFL).

The protein belongs to the UPF0754 family.

The protein localises to the cell membrane. In Bacillus thuringiensis (strain Al Hakam), this protein is UPF0754 membrane protein BALH_0780.